Consider the following 471-residue polypeptide: Adenosylhomocysteinase (471 aa).

Residues Thr-60, Asp-135, and Glu-196 each contribute to the substrate site. 197 to 199 serves as a coordination point for NAD(+); sequence TTT. Substrate-binding residues include Lys-226 and Asp-230. NAD(+)-binding positions include Asn-231, 260–265, Glu-283, Asn-318, 339–341, and Asn-387; these read GYGDVG and IGH.

The protein belongs to the adenosylhomocysteinase family. NAD(+) serves as cofactor.

It localises to the cytoplasm. The enzyme catalyses S-adenosyl-L-homocysteine + H2O = L-homocysteine + adenosine. The protein operates within amino-acid biosynthesis; L-homocysteine biosynthesis; L-homocysteine from S-adenosyl-L-homocysteine: step 1/1. May play a key role in the regulation of the intracellular concentration of adenosylhomocysteine. In Pelodictyon phaeoclathratiforme (strain DSM 5477 / BU-1), this protein is Adenosylhomocysteinase.